The following is a 156-amino-acid chain: MNLNATLFAQMVVFLILAWFTMKFVWPPLINALDERSKKIADGLSAAEKGKAELEAAHKRVDQELAQARNDGQQRVADAEKRAVAVADEIKAQAQAEAARIIAQAKADAEQQVVKARETLRGEVAALAVKGAEQILKREVDQAAHADLLNQLKAEL.

The helical transmembrane segment at 7–27 threads the bilayer; it reads LFAQMVVFLILAWFTMKFVWP.

It belongs to the ATPase B chain family. In terms of assembly, F-type ATPases have 2 components, F(1) - the catalytic core - and F(0) - the membrane proton channel. F(1) has five subunits: alpha(3), beta(3), gamma(1), delta(1), epsilon(1). F(0) has three main subunits: a(1), b(2) and c(10-14). The alpha and beta chains form an alternating ring which encloses part of the gamma chain. F(1) is attached to F(0) by a central stalk formed by the gamma and epsilon chains, while a peripheral stalk is formed by the delta and b chains.

The protein resides in the cell inner membrane. In terms of biological role, f(1)F(0) ATP synthase produces ATP from ADP in the presence of a proton or sodium gradient. F-type ATPases consist of two structural domains, F(1) containing the extramembraneous catalytic core and F(0) containing the membrane proton channel, linked together by a central stalk and a peripheral stalk. During catalysis, ATP synthesis in the catalytic domain of F(1) is coupled via a rotary mechanism of the central stalk subunits to proton translocation. Functionally, component of the F(0) channel, it forms part of the peripheral stalk, linking F(1) to F(0). In Paraburkholderia xenovorans (strain LB400), this protein is ATP synthase subunit b.